The primary structure comprises 397 residues: Elongation factor Tu (397 aa).

The tr-type G domain maps to 10-206 (KPHVNIGTIG…AVDASIPEPE (197 aa)). Residues 19–26 (GHIDHGKT) are G1. 19–26 (GHIDHGKT) lines the GTP pocket. T26 contacts Mg(2+). The G2 stretch occupies residues 62–66 (GITIS). Residues 83-86 (DCPG) form a G3 region. Residues 83–87 (DCPGH) and 138–141 (NKAD) contribute to the GTP site. Positions 138–141 (NKAD) are G4. The segment at 176-178 (SAL) is G5.

This sequence belongs to the TRAFAC class translation factor GTPase superfamily. Classic translation factor GTPase family. EF-Tu/EF-1A subfamily. In terms of assembly, monomer.

Its subcellular location is the cytoplasm. It carries out the reaction GTP + H2O = GDP + phosphate + H(+). GTP hydrolase that promotes the GTP-dependent binding of aminoacyl-tRNA to the A-site of ribosomes during protein biosynthesis. The sequence is that of Elongation factor Tu from Parafrankia sp. (strain EAN1pec).